A 154-amino-acid polypeptide reads, in one-letter code: Ribosome maturation factor RimP (154 aa).

This sequence belongs to the RimP family.

Its subcellular location is the cytoplasm. Its function is as follows. Required for maturation of 30S ribosomal subunits. This is Ribosome maturation factor RimP from Salmonella gallinarum (strain 287/91 / NCTC 13346).